We begin with the raw amino-acid sequence, 564 residues long: Arginine--tRNA ligase (564 aa).

Positions 136-146 (ANPTGPLHMGN) match the 'HIGH' region motif.

It belongs to the class-I aminoacyl-tRNA synthetase family. Monomer.

Its subcellular location is the cytoplasm. It catalyses the reaction tRNA(Arg) + L-arginine + ATP = L-arginyl-tRNA(Arg) + AMP + diphosphate. The protein is Arginine--tRNA ligase of Acetivibrio thermocellus (strain ATCC 27405 / DSM 1237 / JCM 9322 / NBRC 103400 / NCIMB 10682 / NRRL B-4536 / VPI 7372) (Clostridium thermocellum).